Reading from the N-terminus, the 151-residue chain is Large ribosomal subunit protein bL9 (151 aa).

The protein belongs to the bacterial ribosomal protein bL9 family.

Binds to the 23S rRNA. This Mycolicibacterium smegmatis (strain ATCC 700084 / mc(2)155) (Mycobacterium smegmatis) protein is Large ribosomal subunit protein bL9.